Here is a 115-residue protein sequence, read N- to C-terminus: NAD(P)H-quinone oxidoreductase subunit M (115 aa).

Belongs to the complex I NdhM subunit family. NDH-1 can be composed of about 15 different subunits; different subcomplexes with different compositions have been identified which probably have different functions.

Its subcellular location is the cellular thylakoid membrane. It carries out the reaction a plastoquinone + NADH + (n+1) H(+)(in) = a plastoquinol + NAD(+) + n H(+)(out). It catalyses the reaction a plastoquinone + NADPH + (n+1) H(+)(in) = a plastoquinol + NADP(+) + n H(+)(out). NDH-1 shuttles electrons from an unknown electron donor, via FMN and iron-sulfur (Fe-S) centers, to quinones in the respiratory and/or the photosynthetic chain. The immediate electron acceptor for the enzyme in this species is believed to be plastoquinone. Couples the redox reaction to proton translocation, and thus conserves the redox energy in a proton gradient. Cyanobacterial NDH-1 also plays a role in inorganic carbon-concentration. The polypeptide is NAD(P)H-quinone oxidoreductase subunit M (Trichodesmium erythraeum (strain IMS101)).